Here is a 323-residue protein sequence, read N- to C-terminus: COP9 signalosome complex subunit 6 (323 aa).

Positions 37-170 (VALHPLVILN…VSVFESVIDI (134 aa)) constitute an MPN domain.

Belongs to the peptidase M67A family. CSN6 subfamily. As to quaternary structure, component of the CSN complex, composed of COPS1/GPS1, COPS2, COPS3, COPS4, COPS5, COPS6, COPS7 (COPS7A or COPS7B), COPS8 and COPS9. In the complex, it probably interacts directly with COPS2, COPS4, COPS5, COPS7 (COPS7A or COPS7B) and COPS9. Interacts with the translation initiation factor EIF3S6. Interacts weakly with RBX1. Directly interacts with COP1 and 14-3-3 protein sigma/SFN. Interacts with ERCC6.

It localises to the cytoplasm. It is found in the nucleus. Functionally, component of the COP9 signalosome complex (CSN), a complex involved in various cellular and developmental processes. The CSN complex is an essential regulator of the ubiquitin (Ubl) conjugation pathway by mediating the deneddylation of the cullin subunits of SCF-type E3 ligase complexes, leading to decrease the Ubl ligase activity of SCF-type complexes such as SCF, CSA or DDB2. The complex is also involved in phosphorylation of p53/TP53, c-jun/JUN, IkappaBalpha/NFKBIA, ITPK1 and IRF8, possibly via its association with CK2 and PKD kinases. CSN-dependent phosphorylation of TP53 and JUN promotes and protects degradation by the Ubl system, respectively. Has some glucocorticoid receptor-responsive activity. Stabilizes COP1 through reducing COP1 auto-ubiquitination and decelerating COP1 turnover rate, hence regulates the ubiquitination of COP1 targets, including SFN. The sequence is that of COP9 signalosome complex subunit 6 (COPS6) from Sus scrofa (Pig).